Consider the following 250-residue polypeptide: Galectin-3 (250 aa).

The tract at residues 1 to 60 is disordered; sequence MADNFSLHDALSGSGNPNPQGWPGAWGNQPAGAGGYPGASYPGAYPGQAPPGAYPGQAPP. Residue alanine 2 is modified to N-acetylalanine. 2 positions are modified to phosphoserine: serine 6 and serine 12. Tandem repeats lie at residues 36–44, 45–53, and 54–62. The segment at 36–109 is 8 X 9 AA tandem repeats of Y-P-G-X(3)-P-G-A; the sequence is YPGASYPGAY…AYPATGPYGA (74 aa). A compositionally biased stretch (low complexity) spans 38–47; sequence GASYPGAYPG. A compositionally biased stretch (pro residues) spans 48–60; the sequence is QAPPGAYPGQAPP. A 4; approximate repeat occupies 63–69; it reads YPGAPGA. The stretch at 70–78 is repeat 5; it reads YPGAPAPGV. One copy of the 6; approximate repeat lies at 79 to 88; sequence YPGPPSGPGA. A 7; approximate repeat occupies 89 to 100; it reads YPSSGQPSATGA. One copy of the 8; approximate repeat lies at 101-109; sequence YPATGPYGA. Residues 118-248 enclose the Galectin domain; sequence YNLPLPGGVV…DIDLTSASYT (131 aa). 181-187 provides a ligand contact to a beta-D-galactoside; sequence WGREERQ. A Phosphoserine modification is found at serine 188. Positions 226–241 match the Nuclear export signal motif; that stretch reads KKLNEISKLGISGDID.

As to quaternary structure, probably forms homo- or heterodimers. Interacts with DMBT1. Interacts with CD6 and ALCAM. Forms a complex with the ITGA3, ITGB1 and CSPG4. Interacts with LGALS3BP, LYPD3, ZFTRAF1 and UACA. Interacts with TRIM16; this interaction mediates autophagy of damage endomembranes. Interacts with cargo receptor TMED10; the interaction mediates the translocation from the cytoplasm into the ERGIC (endoplasmic reticulum-Golgi intermediate compartment) and thereby secretion. As to expression, a major expression is found in the colonic epithelium. It is also abundant in the activated macrophages. Expressed in fetal membranes.

The protein resides in the cytoplasm. It localises to the nucleus. Its subcellular location is the secreted. Galactose-specific lectin which binds IgE. May mediate with the alpha-3, beta-1 integrin the stimulation by CSPG4 of endothelial cells migration. Together with DMBT1, required for terminal differentiation of columnar epithelial cells during early embryogenesis. In the nucleus: acts as a pre-mRNA splicing factor. Involved in acute inflammatory responses including neutrophil activation and adhesion, chemoattraction of monocytes macrophages, opsonization of apoptotic neutrophils, and activation of mast cells. Together with TRIM16, coordinates the recognition of membrane damage with mobilization of the core autophagy regulators ATG16L1 and BECN1 in response to damaged endomembranes. This chain is Galectin-3, found in Homo sapiens (Human).